We begin with the raw amino-acid sequence, 548 residues long: Chaperonin GroEL 1 (548 aa).

ATP is bound by residues 30-33 (TLGP), K51, 87-91 (DGTTT), G415, 479-481 (NAA), and D495.

The protein belongs to the chaperonin (HSP60) family. In terms of assembly, forms a cylinder of 14 subunits composed of two heptameric rings stacked back-to-back. Interacts with the co-chaperonin GroES.

It is found in the cytoplasm. The enzyme catalyses ATP + H2O + a folded polypeptide = ADP + phosphate + an unfolded polypeptide.. Its function is as follows. Together with its co-chaperonin GroES, plays an essential role in assisting protein folding. The GroEL-GroES system forms a nano-cage that allows encapsulation of the non-native substrate proteins and provides a physical environment optimized to promote and accelerate protein folding. The polypeptide is Chaperonin GroEL 1 (Anaeromyxobacter dehalogenans (strain 2CP-C)).